The chain runs to 330 residues: HTH-type transcriptional regulator GanR (330 aa).

Residues 2 to 57 (ATIKDIAQEAGFSISTVSRVLNNDESLSVPDETREKIYEAAEKLNYRKKTVRPLVK) enclose the HTH lacI-type domain. The H-T-H motif DNA-binding region spans 4–23 (IKDIAQEAGFSISTVSRVLN).

Its function is as follows. Negatively regulates the expression of the ganSPQAB operon. Inhibits transcription of the operon by binding to an operator in the promoter region. In the presence of galactobiose, GanR dissociates from the promoter, resulting in the expression of the gan operon. This is HTH-type transcriptional regulator GanR from Bacillus subtilis (strain 168).